Consider the following 470-residue polypeptide: GDP-Man:Man(3)GlcNAc(2)-PP-Dol alpha-1,2-mannosyltransferase (470 aa).

The Lumenal portion of the chain corresponds to 1 to 15 (MSDTVISLISHSITT). Residues 16–36 (VFYLVPLIIALIIPFSLYSGF) form a helical membrane-spanning segment. Residues 37-131 (RRKSKTVAFF…HYKHCTMLFQ (95 aa)) are Cytoplasmic-facing. Residues 132–152 (ALAGLILALEAWFRMVPAVFI) constitute an intramembrane region (helical). The Cytoplasmic portion of the chain corresponds to 153–378 (DSMGYPLSLP…ISIHTMHNEH (226 aa)). An intramembrane region (helical) is located at residues 379–399 (FGISVVEAMAASTIILSNDSG). At 400–470 (GPRMDIVKDY…HWNKEIEKVL (71 aa)) the chain is on the cytoplasmic side.

The protein belongs to the glycosyltransferase group 1 family. Glycosyltransferase 4 subfamily.

The protein resides in the endoplasmic reticulum membrane. The enzyme catalyses an alpha-D-Man-(1-&gt;3)-[alpha-D-Man-(1-&gt;6)]-beta-D-Man-(1-&gt;4)-beta-D-GlcNAc-(1-&gt;4)-alpha-D-GlcNAc-diphospho-di-trans,poly-cis-dolichol + 2 GDP-alpha-D-mannose = an alpha-D-Man-(1-&gt;2)-alpha-D-Man-(1-&gt;2)-alpha-D-Man-(1-&gt;3)-[alpha-D-Man-(1-&gt;6)]-beta-D-Man-(1-&gt;4)-beta-D-GlcNAc-(1-&gt;4)-alpha-D-GlcNAc-diphospho-di-trans,poly-cis-dolichol + 2 GDP + 2 H(+). The protein operates within protein modification; protein glycosylation. In terms of biological role, GDP-Man:Man(3)GlcNAc(2)-PP-Dol alpha-1,2-mannosyltransferase that operates in the biosynthetic pathway of dolichol-linked oligosaccharides, the glycan precursors employed in protein asparagine (N)-glycosylation. The assembly of dolichol-linked oligosaccharides begins on the cytosolic side of the endoplasmic reticulum membrane and finishes in its lumen. The sequential addition of sugars to dolichol pyrophosphate produces dolichol-linked oligosaccharides containing fourteen sugars, including two GlcNAcs, nine mannoses and three glucoses. Once assembled, the oligosaccharide is transferred from the lipid to nascent proteins by oligosaccharyltransferases. Catalyzes, on the cytoplasmic face of the endoplasmic reticulum, the addition of the fourth and fifth mannose residues to the dolichol-linked oligosaccharide chain, to produce Man(5)GlcNAc(2)-PP-dolichol core oligosaccharide. Man(5)GlcNAc(2)-PP-dolichol is a substrate for ALG3, the following enzyme in the biosynthetic pathway. In Caenorhabditis elegans, this protein is GDP-Man:Man(3)GlcNAc(2)-PP-Dol alpha-1,2-mannosyltransferase.